A 49-amino-acid polypeptide reads, in one-letter code: Large ribosomal subunit protein bL33B (49 aa).

Belongs to the bacterial ribosomal protein bL33 family.

This chain is Large ribosomal subunit protein bL33B (rpmG2), found in Lactococcus lactis subsp. lactis (strain IL1403) (Streptococcus lactis).